Consider the following 1514-residue polypeptide: Neuropathy target esterase sws (1514 aa).

Over 1 to 34 (MDVLELLRASATGSYTALFSDAWCQYVSKQITNS) the chain is Lumenal. The chain crosses the membrane as a helical span at residues 35-55 (MYLYCALGVLSMVFLAWFMYF). Residues 56–1514 (KRLARIRLRD…KGGAYNETKN (1459 aa)) lie on the Cytoplasmic side of the membrane. Residue 175-302 (IFGHFEKPVF…IRVIQVIMIR (128 aa)) coordinates a nucleoside 3',5'-cyclic phosphate. The segment covering 337–352 (STHSSQCSRQTGSQPT) has biased composition (polar residues). A disordered region spans residues 337 to 418 (STHSSQCSRQ…NPNPDVINTS (82 aa)). Residues 356 to 374 (PAPTCSNTTTTASPTTANT) are compositionally biased toward low complexity. The residue at position 457 (Ser457) is a Phosphoserine. A nucleoside 3',5'-cyclic phosphate contacts are provided by residues 515-644 (ELGL…VVRR) and 633-760 (IVLD…LSHR). Residues 987–1153 (LVLGGGGARG…VNNLPGQLWR (167 aa)) form the PNPLA domain. The GXGXXG signature appears at 991–996 (GGGARG). Residues 1018 to 1022 (GVSIG) carry the GXSXG motif. Catalysis depends on Ser1020, which acts as the Nucleophile. The active-site Proton acceptor is the Asp1140. A DGA/G motif is present at residues 1140–1142 (DGG). Ser1234 is modified (phosphoserine). A disordered region spans residues 1409–1514 (EKSIHSAATS…KGGAYNETKN (106 aa)). Composition is skewed to basic and acidic residues over residues 1425–1449 (RSRE…ETER) and 1456–1470 (LDRK…KEPE). Positions 1471 to 1489 (QEQELETEEPNQENTEVEE) are enriched in acidic residues.

Belongs to the NTE family. As to quaternary structure, interacts with Pka-C3; interaction inhibits the catalytic function of Pka-C3 and the esterase activity of sws.

It localises to the endoplasmic reticulum membrane. The enzyme catalyses a 1-acyl-sn-glycero-3-phosphocholine + H2O = sn-glycerol 3-phosphocholine + a fatty acid + H(+). Functionally, phospholipase B that deacylates intracellular phosphatidylcholine (PtdCho), generating glycerophosphocholine (GroPtdCho). This deacylation occurs at both sn-2 and sn-1 positions of PtdCho. Its specific chemical modification by certain organophosphorus (OP) compounds leads to distal axonopathy. Plays a role in the signaling mechanism between neurons and glia that regulates glia wrapping during development of the adult brain. Essential for membrane lipid homeostasis and cell survival in both neurons and glia of the adult brain. This Drosophila ananassae (Fruit fly) protein is Neuropathy target esterase sws.